Consider the following 342-residue polypeptide: Heat-inducible transcription repressor HrcA (342 aa).

This sequence belongs to the HrcA family.

In terms of biological role, negative regulator of class I heat shock genes (grpE-dnaK-dnaJ and groELS operons). Prevents heat-shock induction of these operons. In Dechloromonas aromatica (strain RCB), this protein is Heat-inducible transcription repressor HrcA.